The primary structure comprises 369 residues: Glutamate 5-kinase (369 aa).

Position 10 (lysine 10) interacts with ATP. Positions 50, 137, and 149 each coordinate substrate. Residues 169-170 (TD) and 210-216 (TGGMVTK) contribute to the ATP site. In terms of domain architecture, PUA spans 276–349 (EGSIFIDEGA…GKHSEEMLAT (74 aa)).

The protein belongs to the glutamate 5-kinase family.

The protein localises to the cytoplasm. It catalyses the reaction L-glutamate + ATP = L-glutamyl 5-phosphate + ADP. Its pathway is amino-acid biosynthesis; L-proline biosynthesis; L-glutamate 5-semialdehyde from L-glutamate: step 1/2. In terms of biological role, catalyzes the transfer of a phosphate group to glutamate to form L-glutamate 5-phosphate. The chain is Glutamate 5-kinase from Desulfitobacterium hafniense (strain Y51).